A 218-amino-acid polypeptide reads, in one-letter code: NAD(P)H-quinone oxidoreductase subunit I (218 aa).

4Fe-4S ferredoxin-type domains lie at 55 to 84 and 95 to 124; these read GRIH…VDWV and RNYS…MTEE. The [4Fe-4S] cluster site is built by Cys64, Cys67, Cys70, Cys74, Cys104, Cys107, Cys110, and Cys114. The interval 168 to 218 is disordered; that stretch reads EVQPHGVDPSRPRAGQRPDQVLSSLKQNAGGSAGNEGESATSTNTSKGSAE. Residues 208–218 are compositionally biased toward polar residues; that stretch reads TSTNTSKGSAE.

The protein belongs to the complex I 23 kDa subunit family. As to quaternary structure, NDH-1 is composed of at least 11 different subunits. [4Fe-4S] cluster serves as cofactor.

It localises to the cellular thylakoid membrane. The catalysed reaction is a plastoquinone + NADH + (n+1) H(+)(in) = a plastoquinol + NAD(+) + n H(+)(out). The enzyme catalyses a plastoquinone + NADPH + (n+1) H(+)(in) = a plastoquinol + NADP(+) + n H(+)(out). Functionally, NDH-1 shuttles electrons from an unknown electron donor, via FMN and iron-sulfur (Fe-S) centers, to quinones in the respiratory and/or the photosynthetic chain. The immediate electron acceptor for the enzyme in this species is believed to be plastoquinone. Couples the redox reaction to proton translocation, and thus conserves the redox energy in a proton gradient. This chain is NAD(P)H-quinone oxidoreductase subunit I, found in Synechococcus sp. (strain WH7803).